A 124-amino-acid polypeptide reads, in one-letter code: Small ribosomal subunit protein uS12c (124 aa).

Belongs to the universal ribosomal protein uS12 family. As to quaternary structure, part of the 30S ribosomal subunit.

It is found in the plastid. Its subcellular location is the chloroplast. With S4 and S5 plays an important role in translational accuracy. Located at the interface of the 30S and 50S subunits. This is Small ribosomal subunit protein uS12c (rps12) from Oryza nivara (Indian wild rice).